We begin with the raw amino-acid sequence, 231 residues long: uncharacterized protein (231 aa).

6 helical membrane passes run 4–24, 29–49, 58–78, 95–115, 147–167, and 211–231; these read YIIY…LQIS, SMIF…LVIG, AGNA…ALPL, TVVI…LLLG, VTAV…YLVL, and LCGI…YFFV.

This sequence belongs to the YohK (E.coli)/YwbG (IPA-22R) (B.subtilis) family.

It is found in the cell membrane. This is an uncharacterized protein from Haemophilus influenzae (strain ATCC 51907 / DSM 11121 / KW20 / Rd).